A 348-amino-acid chain; its full sequence is Sulfate/thiosulfate import ATP-binding protein CysA (348 aa).

The region spanning 3 to 233 (ILIDNISKKF…PATPFVFSLL (231 aa)) is the ABC transporter domain. 35–42 (GPSGSGKS) contacts ATP.

This sequence belongs to the ABC transporter superfamily. Sulfate/tungstate importer (TC 3.A.1.6) family.

Its subcellular location is the plastid. It localises to the chloroplast. The enzyme catalyses sulfate(out) + ATP + H2O = sulfate(in) + ADP + phosphate + H(+). The catalysed reaction is thiosulfate(out) + ATP + H2O = thiosulfate(in) + ADP + phosphate + H(+). Part of the ABC transporter complex involved in sulfate/thiosulfate import. Responsible for energy coupling to the transport system. The protein is Sulfate/thiosulfate import ATP-binding protein CysA of Mesostigma viride (Green alga).